The primary structure comprises 207 residues: rRNA N(6)-adenosine-methyltransferase METTL5 (207 aa).

Residues Gln-25, Thr-28, Gly-56, Cys-59, Val-61, Asp-78, and 105–106 contribute to the S-adenosyl-L-methionine site; that span reads DV.

This sequence belongs to the methyltransferase superfamily. PrmA family.

The protein resides in the nucleus. It is found in the presynapse. It localises to the postsynapse. It carries out the reaction adenosine(1832) in 18S rRNA + S-adenosyl-L-methionine = N(6)-methyladenosine(1832) in 18S rRNA + S-adenosyl-L-homocysteine + H(+). Its activity is regulated as follows. rRNA N6-adenosine-methyltransferase activity is inhibited by zinc. Functionally, catalytic subunit of a heterodimer with TRMT112, which specifically methylates the 6th position of adenine in position 1832 of 18S rRNA. N6-methylation of adenine(1832) in 18S rRNA resides in the decoding center of 18S rRNA and is required for translation and embryonic stem cells (ESCs) pluripotency and differentiation. The sequence is that of rRNA N(6)-adenosine-methyltransferase METTL5 from Danio rerio (Zebrafish).